The chain runs to 209 residues: Putative 3-methyladenine DNA glycosylase (209 aa).

It belongs to the DNA glycosylase MPG family.

This Lactiplantibacillus plantarum (strain ATCC BAA-793 / NCIMB 8826 / WCFS1) (Lactobacillus plantarum) protein is Putative 3-methyladenine DNA glycosylase.